Consider the following 426-residue polypeptide: MTQLEAAKRGEITEEMKFIAEREGIDPEKLRRSVAKGYTVIFRNVRHDWVKPVAVGNVVRVKVNANIGTSRDIVNVKAEIEKAKVAVKYGADTIMDLSTGGDLDSIRKAIMHAVDVPIGTVPIYQAAEEMLAKGKAIIEMSEDDMWNAVEKHFKDGVDYTTIHVGVTKEVVEKMKRVKRVVGMVSRGGTFLAAWILHWGEENPFYRDYDYLLELAKEYDVVLSLGDGLRPGGLPDAGDELQIAELYTLGRLVRRAREAGVQTMVEGPGHVPIDQIPAQIKLAKVATDNAPFYVLGPIVTDIFPGYDHITSAIGGAIAALNGADFLCYVTPAEHLGLPTVEHVREGVIAAKIAAHAVNLTRFEADFKKDYLMSLARGKLDWARQFELSQDREKFIEIRKERPTKTEACSMCGDLCAIKLINDMLRKG.

Substrate-binding positions include Asn-66, Met-95, Tyr-124, His-163, 185-187 (SRG), 226-229 (DGLR), and Glu-265. His-269 contributes to the Zn(2+) binding site. Residue Tyr-292 coordinates substrate. His-333 is a binding site for Zn(2+). [4Fe-4S] cluster contacts are provided by Cys-407, Cys-410, and Cys-414.

The protein belongs to the ThiC family. The cofactor is [4Fe-4S] cluster.

The enzyme catalyses 5-amino-1-(5-phospho-beta-D-ribosyl)imidazole + S-adenosyl-L-methionine = 4-amino-2-methyl-5-(phosphooxymethyl)pyrimidine + CO + 5'-deoxyadenosine + formate + L-methionine + 3 H(+). The protein operates within cofactor biosynthesis; thiamine diphosphate biosynthesis. Its function is as follows. Catalyzes the synthesis of the hydroxymethylpyrimidine phosphate (HMP-P) moiety of thiamine from aminoimidazole ribotide (AIR) in a radical S-adenosyl-L-methionine (SAM)-dependent reaction. This Thermococcus gammatolerans (strain DSM 15229 / JCM 11827 / EJ3) protein is Phosphomethylpyrimidine synthase.